Consider the following 492-residue polypeptide: MAADTGSWCVYAVLRFFYSLFFPGLMICGVLCVYLVIGLWVIRWHLQRKKKSVSTSKNGKEQTVVAFFHPYCNAGGGGERVLWCALRALQKKYPEAVYVVYTGDINVSGQQILDGAFRRFNIKLAHPVQFVFLRKRYLVEDSRYPHFTLLGQSLGSILLGWEALMQRVPDVYIDSMGYAFTLPLFKYVGGCRVGSYVHYPTISTDMLSVVKNQNPGFNNAAFISRNALLSKAKLIYYYLFAFVYGLVGSCSDIVMVNSSWTLNHILSLWKVGHCTNIVYPPCDVQTFLDIPLHEKKVTPGHLLVSIGQFRPEKNHALQIKAFAKLLNEKAAELGHSLKLVLIGGCRNKDDEFRVNQLRSLSENLGVQENVEFKINISFDELKNYLSEATIGLHTMWNEHFGIGVVECMAAGTVILAHNSGGPKLDIVIPHEGQITGFLAESEEGYADSMAHILSLSAEERLQIRKNARASISRFSDQEFEVAFLCSMEKLLT.

Residues 1 to 19 (MAADTGSWCVYAVLRFFYS) are Lumenal-facing. The chain crosses the membrane as a helical span at residues 20–40 (LFFPGLMICGVLCVYLVIGLW). Topologically, residues 41-233 (VIRWHLQRKK…SRNALLSKAK (193 aa)) are cytoplasmic. An intramembrane region (helical) is located at residues 234-254 (LIYYYLFAFVYGLVGSCSDIV). The Cytoplasmic portion of the chain corresponds to 255–399 (MVNSSWTLNH…IGLHTMWNEH (145 aa)). An intramembrane region (helical) is located at residues 400–420 (FGIGVVECMAAGTVILAHNSG). Residues 421 to 492 (GPKLDIVIPH…FLCSMEKLLT (72 aa)) are Cytoplasmic-facing.

It belongs to the glycosyltransferase group 1 family. Glycosyltransferase 4 subfamily.

The protein resides in the endoplasmic reticulum membrane. The enzyme catalyses an alpha-D-Man-(1-&gt;3)-[alpha-D-Man-(1-&gt;6)]-beta-D-Man-(1-&gt;4)-beta-D-GlcNAc-(1-&gt;4)-alpha-D-GlcNAc-diphospho-di-trans,poly-cis-dolichol + 2 GDP-alpha-D-mannose = an alpha-D-Man-(1-&gt;2)-alpha-D-Man-(1-&gt;2)-alpha-D-Man-(1-&gt;3)-[alpha-D-Man-(1-&gt;6)]-beta-D-Man-(1-&gt;4)-beta-D-GlcNAc-(1-&gt;4)-alpha-D-GlcNAc-diphospho-di-trans,poly-cis-dolichol + 2 GDP + 2 H(+). Its pathway is protein modification; protein glycosylation. In terms of biological role, GDP-Man:Man(3)GlcNAc(2)-PP-Dol alpha-1,2-mannosyltransferase that operates in the biosynthetic pathway of dolichol-linked oligosaccharides, the glycan precursors employed in protein asparagine (N)-glycosylation. The assembly of dolichol-linked oligosaccharides begins on the cytosolic side of the endoplasmic reticulum membrane and finishes in its lumen. The sequential addition of sugars to dolichol pyrophosphate produces dolichol-linked oligosaccharides containing fourteen sugars, including two GlcNAcs, nine mannoses and three glucoses. Once assembled, the oligosaccharide is transferred from the lipid to nascent proteins by oligosaccharyltransferases. Catalyzes, on the cytoplasmic face of the endoplasmic reticulum, the addition of the fourth and fifth mannose residues to the dolichol-linked oligosaccharide chain, to produce Man(5)GlcNAc(2)-PP-dolichol core oligosaccharide. Man(5)GlcNAc(2)-PP-dolichol is a substrate for ALG3, the following enzyme in the biosynthetic pathway. This is GDP-Man:Man(3)GlcNAc(2)-PP-Dol alpha-1,2-mannosyltransferase from Mus musculus (Mouse).